The sequence spans 141 residues: MKKLSLSLMLNVSLALMLALSLIYPQSVAVNFVAAWAILATVICVVAGGVGVYATEYVLERYGRELPPESLAVKIVTSLFLQPVPWRRRAAALVVVVATFISLVAAGWIFTALIYLVVSLFFRLIRKACRQRLEGREPCQG.

The next 3 membrane-spanning stretches (helical) occupy residues 4–24, 32–52, and 94–114; these read LSLS…SLIY, FVAA…GVGV, and VVVV…TALI.

In terms of assembly, interacts with holin; this interaction this interaction blocks the holin homomultimerization and delays the host cell lysis.

Its subcellular location is the host cell inner membrane. Involved in lysis inhibition. Interacts with and inhibits the holin thereby delaying the host cell lysis timing. The protein is Putative antiholin (lysA) of Enterobacteriaceae (Bacteriophage P2).